The chain runs to 783 residues: MRVADVPGLPGGVADHFEGEGVEELYPPQAEAVERGVTEGANLVASVPTASGKTLIAQLAMLSAIAEGGDSPTFSGDGTALYIVPLRALAGEKAQEFEAFERFGLSVGVSTGNYERDGARLADNDIVVATSEKVDSLVRNGAGWIDDLSCVVADEVHLVDDDHRGPTLEVTLAKLRQQVADLQVVALSATVGNAGELAAWLDAELVDSDWRPIELRTGVHYGQSLHYDDGTQAELSVGSGSQTAAVVADTLADDGSTLVFVNSRRNAEASARRLADVTGNALSSAERERLADIAAEIRGVSDTETSDELADAVASGAAFHHAGLAREHRELVEEAFRDRLVKAVSATPTLAAGVNTPARRVVVRDWQRYDGTAGGMQPLDVLEVHQMFGRAGRPGLDPYGEAVLLANSHDELEELFDRYVYADPEPVRSKLAAEPALRTHVLAAIATGFTTTEDGLHEFLGGTLYATQTDDTGRLRSVTGDVLRYLDRNGFVERDGAALRATATGQLVSRLYVDPMSAATIIDGLRDAARDATETDDEGAFRPASELGDDAALPADASVEPTPLGLYHLVSRTPDMYELYLRSGDREQYTEVAYEHEDELLGATPREEQAEFEDWLSALKTARLMADWASELDEERIAERYDVGPGDIRGKVETAEWLLNAAERLAGELDVECGPAVREARKRVQYGVREELLGLAGVRNVGRKRARRLYNAGVESRADLRNADKGVVLGAVRGRAATAERILETVGHPDPGMDGVAADTDAAPESGGEAGGDEGQASLGDFS.

ATP contacts are provided by residues glutamine 29 and 47 to 54 (VPTASGKT). Residues 34 to 209 (ERGVTEGANL…WLDAELVDSD (176 aa)) enclose the Helicase ATP-binding domain. Residues 154–157 (DEVH) carry the DEAH box motif. The Helicase C-terminal domain occupies 242-443 (QTAAVVADTL…EPALRTHVLA (202 aa)). The tract at residues 744 to 783 (ETVGHPDPGMDGVAADTDAAPESGGEAGGDEGQASLGDFS) is disordered.

This sequence belongs to the helicase family. Hel308 subfamily. As to quaternary structure, monomer.

The enzyme catalyses Couples ATP hydrolysis with the unwinding of duplex DNA by translocating in the 3'-5' direction.. The catalysed reaction is ATP + H2O = ADP + phosphate + H(+). Its function is as follows. DNA-dependent ATPase and 3'-5' DNA helicase that may be involved in repair of stalled replication forks. The protein is ATP-dependent DNA helicase Hel308 of Halobacterium salinarum (strain ATCC 700922 / JCM 11081 / NRC-1) (Halobacterium halobium).